Reading from the N-terminus, the 213-residue chain is Adenylate kinase (213 aa).

An ATP-binding site is contributed by 10–15; that stretch reads GSGKGT. Positions 30–59 are NMP; sequence SVGDLLRNIISSSSELGKKIKGTVESGNLI. AMP-binding positions include Arg-36, 57 to 59, 83 to 86, and Gln-90; these read NLI and GFPR. Residues 125 to 160 are LID; sequence NRLACLDCKNIYSVSSFKSTTCAKCKSTRLEKRIDD. Position 126 (Arg-126) interacts with ATP. Zn(2+)-binding residues include Cys-129 and Cys-132. Position 135–136 (135–136) interacts with ATP; sequence IY. Cys-146 and Cys-149 together coordinate Zn(2+). Residues Arg-157 and Arg-169 each contribute to the AMP site. Leu-195 is an ATP binding site.

The protein belongs to the adenylate kinase family. Monomer.

The protein resides in the cytoplasm. The enzyme catalyses AMP + ATP = 2 ADP. Its pathway is purine metabolism; AMP biosynthesis via salvage pathway; AMP from ADP: step 1/1. Functionally, catalyzes the reversible transfer of the terminal phosphate group between ATP and AMP. Plays an important role in cellular energy homeostasis and in adenine nucleotide metabolism. This Wolbachia pipientis wMel protein is Adenylate kinase.